The following is a 351-amino-acid chain: Protein Wnt-4 (351 aa).

The first 22 residues, Met-1–Ala-22, serve as a signal peptide directing secretion. Asn-21 and Asn-88 each carry an N-linked (GlcNAc...) asparagine glycan. Disulfide bonds link Cys-78–Cys-89, Cys-128–Cys-136, Cys-138–Cys-155, Cys-206–Cys-220, Cys-208–Cys-215, Cys-280–Cys-311, Cys-296–Cys-306, Cys-310–Cys-350, Cys-326–Cys-341, Cys-328–Cys-338, and Cys-333–Cys-334. Ser-212 carries the O-palmitoleoyl serine; by PORCN lipid modification. N-linked (GlcNAc...) asparagine glycosylation is present at Asn-297.

It belongs to the Wnt family. As to quaternary structure, interacts with CPZ. Post-translationally, palmitoleoylation is required for efficient binding to frizzled receptors. Depalmitoleoylation leads to Wnt signaling pathway inhibition. As to expression, predominantly expressed in the diencephalon neuromere D2.

The protein resides in the secreted. It is found in the extracellular space. It localises to the extracellular matrix. In terms of biological role, ligand for members of the frizzled family of seven transmembrane receptors. Plays an important role in embryonic development. The polypeptide is Protein Wnt-4 (WNT4) (Gallus gallus (Chicken)).